A 71-amino-acid chain; its full sequence is Large ribosomal subunit protein bL31 (71 aa).

The Zn(2+) site is built by Cys16, Cys18, Cys37, and Cys40.

It belongs to the bacterial ribosomal protein bL31 family. Type A subfamily. Part of the 50S ribosomal subunit. It depends on Zn(2+) as a cofactor.

In terms of biological role, binds the 23S rRNA. The protein is Large ribosomal subunit protein bL31 of Pseudomonas entomophila (strain L48).